A 349-amino-acid chain; its full sequence is Core protein VP7 (349 aa).

Residue asparagine 287 is glycosylated (N-linked (GlcNAc...) asparagine; by host).

Belongs to the orbivirus VP7 family. Homotrimer that assemble in a complex of 260 capsomers on an inner scaffold composed of VP3.

Its subcellular location is the virion. Functionally, the VP7 protein is one of the five proteins (with VP1, VP3, VP4, and VP6) which form the inner capsid of the virus. The chain is Core protein VP7 (Segment-7) from Bluetongue virus 1 (isolate Australia) (BTV 1).